Reading from the N-terminus, the 654-residue chain is tRNA 5-methylaminomethyl-2-thiouridine biosynthesis bifunctional protein MnmC (654 aa).

The segment at 1–236 (MPTLLQHAQI…KWEVMSGAYV (236 aa)) is tRNA (mnm(5)s(2)U34)-methyltransferase. The segment at 262–654 (IGAGLAGSSS…FGLRRLIRGK (393 aa)) is FAD-dependent cmnm(5)s(2)U34 oxidoreductase.

The protein in the N-terminal section; belongs to the methyltransferase superfamily. tRNA (mnm(5)s(2)U34)-methyltransferase family. It in the C-terminal section; belongs to the DAO family. It depends on FAD as a cofactor.

The protein localises to the cytoplasm. The catalysed reaction is 5-aminomethyl-2-thiouridine(34) in tRNA + S-adenosyl-L-methionine = 5-methylaminomethyl-2-thiouridine(34) in tRNA + S-adenosyl-L-homocysteine + H(+). Catalyzes the last two steps in the biosynthesis of 5-methylaminomethyl-2-thiouridine (mnm(5)s(2)U) at the wobble position (U34) in tRNA. Catalyzes the FAD-dependent demodification of cmnm(5)s(2)U34 to nm(5)s(2)U34, followed by the transfer of a methyl group from S-adenosyl-L-methionine to nm(5)s(2)U34, to form mnm(5)s(2)U34. This chain is tRNA 5-methylaminomethyl-2-thiouridine biosynthesis bifunctional protein MnmC, found in Pseudomonas putida (strain ATCC 47054 / DSM 6125 / CFBP 8728 / NCIMB 11950 / KT2440).